The primary structure comprises 240 residues: Regulatory protein HlyX (240 aa).

An essential for the oxygen-regulated activity region spans residues 15–28 (CTIHCQNCSISQLC). Positions 163-236 (MSAEEKLAAF…GKYITINRMD (74 aa)) constitute an HTH crp-type domain. Positions 196–215 (RGDIGNYLGLTIETISRLLG) form a DNA-binding region, H-T-H motif.

It localises to the cytoplasm. Functionally, confers a hemolytic phenotype on E.coli. May regulate, rather than mediate, hemolytic activity. This Actinobacillus pleuropneumoniae (Haemophilus pleuropneumoniae) protein is Regulatory protein HlyX (hlyX).